We begin with the raw amino-acid sequence, 260 residues long: Protein TONNEAU 1a (260 aa).

The LisH domain occupies 73–105; it reads SGRLLSALICEYLDWAQLNHTLIVYQPESNLPK. Disordered stretches follow at residues 147–224 and 236–260; these read TQGM…EEVT and DRKTRNLTSSWRNVRDGTNEEEGRD. Low complexity predominate over residues 161–175; the sequence is ESSSSLESRNPPRRS. Basic and acidic residues predominate over residues 248-260; it reads NVRDGTNEEEGRD.

Interacts with CEN1, LNG1/TRM2 and LNG2/TRM1 (via C-terminus).

The protein localises to the cytoplasm. The protein resides in the cytoskeleton. In terms of biological role, involved in the control of the dynamic organization of the cortical cytoskeleton. May play a role in the organization of microtubule arrays at the centrosome through interaction with centrin 1 (CEN1). This chain is Protein TONNEAU 1a (TON1A), found in Arabidopsis thaliana (Mouse-ear cress).